Here is a 486-residue protein sequence, read N- to C-terminus: Aspartyl/glutamyl-tRNA(Asn/Gln) amidotransferase subunit B (486 aa).

This sequence belongs to the GatB/GatE family. GatB subfamily. Heterotrimer of A, B and C subunits.

It catalyses the reaction L-glutamyl-tRNA(Gln) + L-glutamine + ATP + H2O = L-glutaminyl-tRNA(Gln) + L-glutamate + ADP + phosphate + H(+). It carries out the reaction L-aspartyl-tRNA(Asn) + L-glutamine + ATP + H2O = L-asparaginyl-tRNA(Asn) + L-glutamate + ADP + phosphate + 2 H(+). Its function is as follows. Allows the formation of correctly charged Asn-tRNA(Asn) or Gln-tRNA(Gln) through the transamidation of misacylated Asp-tRNA(Asn) or Glu-tRNA(Gln) in organisms which lack either or both of asparaginyl-tRNA or glutaminyl-tRNA synthetases. The reaction takes place in the presence of glutamine and ATP through an activated phospho-Asp-tRNA(Asn) or phospho-Glu-tRNA(Gln). This is Aspartyl/glutamyl-tRNA(Asn/Gln) amidotransferase subunit B from Azoarcus sp. (strain BH72).